Here is a 508-residue protein sequence, read N- to C-terminus: UTP--glucose-1-phosphate uridylyltransferase (508 aa).

Ser-2 carries the post-translational modification N-acetylserine. A phosphoserine mark is found at Ser-2 and Ser-13. UTP-binding positions include 113-116 (LNGG), Lys-127, Gln-190, and Gly-222. A substrate-binding site is contributed by 115 to 116 (GG). Lys-127 provides a ligand contact to Mg(2+). Substrate-binding positions include His-223, 251–253 (NID), and Asn-330. Residue Asp-253 coordinates UTP. Asp-253 provides a ligand contact to Mg(2+). Position 396 (Lys-396) interacts with UTP. Residue Lys-396 is part of the active site. Thr-426 is subject to Phosphothreonine. Ser-434 carries the post-translational modification Phosphoserine. Lys-438 is modified (N6-acetyllysine). Residues Ser-448 and Ser-461 each carry the phosphoserine modification. The tract at residues 457-508 (HLTVSGDVTFGKNVSLKGTVIIIANHGDRIDIPPGAVLENKIVSGNLRILDH) is oligomerization. The tract at residues 502-503 (NL) is critical for end-to-end subunit interaction.

Belongs to the UDPGP type 1 family. Homooctamer. Highly expressed in various brain regions. Expressed in amygdala, anterior cingulate cortex, caudate, cerebellar hemisphere, cerebellum, cortex, frontal cortex, hippocampus, hypothalamus, nucleus accumbens, putamen, spinal cord and substantia nigra. Also widely expressed among other tissues, including liver, heart, placenta, lung, kidney, pancreas and skeletal muscle.

It localises to the cytoplasm. It catalyses the reaction alpha-D-glucose 1-phosphate + UTP + H(+) = UDP-alpha-D-glucose + diphosphate. It functions in the pathway glycan biosynthesis; glycogen biosynthesis. UTP--glucose-1-phosphate uridylyltransferase catalyzing the conversion of glucose-1-phosphate into UDP-glucose, a crucial precursor for the production of glycogen. The protein is UTP--glucose-1-phosphate uridylyltransferase of Homo sapiens (Human).